Here is a 454-residue protein sequence, read N- to C-terminus: MSLRPISLMLALLLTSAPALAQSAPTPPATVQTEPRETIEGTLSQERTVIGIPSFATASVQTVAGLRTDALGRQLADVIAADLERSGLFEPIGPNGVRAIGRAEVQAPRFGEWQARGAENVVHGFVDAGSNGSLIVGCYLYDTALGSELVRKGFEIQPADWRRAAHKCADAIYSRLSGEAPFFDSRVAYIAESGPKGNRIKRLAIMDSDGGNHRFITNGQALALSPRFSPDYKKIVYVSYLNDRVRVFIYDVASGTQRLVTESRNPTFAPRWSPDGTQILYSMAVGGNTDIYRISANGGTPVRLTTAPGIDVGGSFSPDGRKIVFESDRSGSQQLYVMNIDGSNQQRISFGGGRYATPEWSPRGDLIAFTRMGGGEFRIGVMTPSGGGVRMLTNGWQDEAPTWSPNGRVIQFFRTTPGREGRSSLWQVDLTGVNLRRLPTPQDGSDPSWGPVLP.

Positions 1 to 21 are cleaved as a signal peptide; sequence MSLRPISLMLALLLTSAPALA.

It belongs to the TolB family. In terms of assembly, the Tol-Pal system is composed of five core proteins: the inner membrane proteins TolA, TolQ and TolR, the periplasmic protein TolB and the outer membrane protein Pal. They form a network linking the inner and outer membranes and the peptidoglycan layer.

Its subcellular location is the periplasm. Functionally, part of the Tol-Pal system, which plays a role in outer membrane invagination during cell division and is important for maintaining outer membrane integrity. The sequence is that of Tol-Pal system protein TolB from Sphingopyxis alaskensis (strain DSM 13593 / LMG 18877 / RB2256) (Sphingomonas alaskensis).